The sequence spans 444 residues: Chitinase-like protein Idgf4 (444 aa).

The N-terminal stretch at 1–22 (MKLLLILLGALLAVLTIKRTSA) is a signal peptide. Residues 27-444 (NHLICYYDGT…ILRAIKFKFQ (418 aa)) form the GH18 domain. Residues Cys-31 and Cys-58 are joined by a disulfide bond. N-linked (GlcNAc...) asparagine glycosylation occurs at Asn-226. The cysteines at positions 345 and 428 are disulfide-linked.

Belongs to the glycosyl hydrolase 18 family. IDGF subfamily. Post-translationally, glycosylated.

It localises to the secreted. Functionally, cooperates with insulin-like peptides to stimulate the proliferation, polarization and motility of imaginal disk cells. May act by stabilizing the binding of insulin-like peptides to its receptor through a simultaneous interaction with both molecules to form a multiprotein signaling complex. The sequence is that of Chitinase-like protein Idgf4 (Idgf4) from Glossina morsitans morsitans (Savannah tsetse fly).